The primary structure comprises 558 residues: Alpha-1,3-mannosyltransferase MNT2 (558 aa).

The Cytoplasmic portion of the chain corresponds to 1-6 (MRRKNR). Residues 7–27 (LFILVVLLGIVLVVYYSQLNS) traverse the membrane as a helical; Signal-anchor for type II membrane protein segment. Residues 28 to 558 (LDLVEPVQSS…QIVDIWNKDI (531 aa)) are Lumenal-facing. The N-linked (GlcNAc...) asparagine glycan is linked to Asn-187.

It belongs to the MNN1/MNT family.

It localises to the golgi apparatus membrane. Its pathway is protein modification; protein glycosylation. Its function is as follows. Mannosyltransferase involved in adding the 4th and 5th mannose residues of O-linked glycans. This Saccharomyces cerevisiae (strain ATCC 204508 / S288c) (Baker's yeast) protein is Alpha-1,3-mannosyltransferase MNT2 (MNT2).